Reading from the N-terminus, the 215-residue chain is Small ribosomal subunit protein uS7 (215 aa).

The protein belongs to the universal ribosomal protein uS7 family. Part of the 30S ribosomal subunit.

In terms of biological role, one of the primary rRNA binding proteins, it binds directly to 16S rRNA where it nucleates assembly of the head domain of the 30S subunit. Is located at the subunit interface close to the decoding center. This chain is Small ribosomal subunit protein uS7, found in Thermococcus celer.